The primary structure comprises 315 residues: Melanocyte-stimulating hormone receptor (315 aa).

Over 1–35 (MSTQEPQKSLLGSLNSNATSHLGLATNQSEPWCLY) the chain is Extracellular. Residues asparagine 17 and asparagine 27 are each glycosylated (N-linked (GlcNAc...) asparagine). The helical transmembrane segment at 36–61 (VSIPDGLFLSLGLVSLVENVLVVIAI) threads the bilayer. Over 62 to 70 (TKNRNLHSP) the chain is Cytoplasmic. The chain crosses the membrane as a helical span at residues 71–91 (MYYFICCLALSDLMVSVSIVL). At 92–116 (ETTIILLLEAGILVARVALVQQLDN) the chain is on the extracellular side. Residues 117–138 (LIDVLICGSMVSSLCFLGIIAI) form a helical membrane-spanning segment. Over 139–161 (DRYISIFYALRYHSIVTLPRARR) the chain is Cytoplasmic. A helical transmembrane segment spans residues 162 to 181 (AVVGIWMVSIVSSTLFITYY). The Extracellular segment spans residues 182–189 (KHTAVLLC). The helical transmembrane segment at 190-209 (LVTFFLAMLALMAILYAHMF) threads the bilayer. The Cytoplasmic portion of the chain corresponds to 210 to 238 (TRACQHAQGIAQLHKRRRSIRQGFCLKGA). Residues 239–264 (ATLTILLGIFFLCWGPFFLHLLLIVL) traverse the membrane as a helical segment. At 265–277 (CPQHPTCSCIFKN) the chain is on the extracellular side. A helical membrane pass occupies residues 278–298 (FNLFLLLIVLSSTVDPLIYAF). The Cytoplasmic portion of the chain corresponds to 299–315 (RSQELRMTLKEVLLCSW). Cysteine 313 carries the S-palmitoyl cysteine lipid modification.

Belongs to the G-protein coupled receptor 1 family. Interacts with MGRN1, but does not undergo MGRN1-mediated ubiquitination; this interaction competes with GNAS-binding and thus inhibits agonist-induced cAMP production. Interacts with OPN3; the interaction results in a decrease in MC1R-mediated cAMP signaling and ultimately a decrease in melanin production in melanocytes.

Its subcellular location is the cell membrane. In terms of biological role, receptor for MSH (alpha, beta and gamma) and ACTH. The activity of this receptor is mediated by G proteins which activate adenylate cyclase. Mediates melanogenesis, the production of eumelanin (black/brown) and phaeomelanin (red/yellow), via regulation of cAMP signaling in melanocytes. The protein is Melanocyte-stimulating hormone receptor (Mc1r) of Mus musculus (Mouse).